The following is a 127-amino-acid chain: MNLIAQLEAEQVEALAKDIPDFKAGDTVRVGFRVTEGTRTRVQNYEGVCIARKNGHGIAGSFTVRKISFGEGVERVFPLHSTNIDSITVIRRGRVRRAKLYYLRSRRGKSARIAEDTRYKPRKSASA.

The protein belongs to the bacterial ribosomal protein bL19 family.

In terms of biological role, this protein is located at the 30S-50S ribosomal subunit interface and may play a role in the structure and function of the aminoacyl-tRNA binding site. In Jannaschia sp. (strain CCS1), this protein is Large ribosomal subunit protein bL19.